Reading from the N-terminus, the 453-residue chain is Probable acetylornithine aminotransferase, mitochondrial (453 aa).

Residue lysine 302 is modified to N6-(pyridoxal phosphate)lysine.

The protein belongs to the class-III pyridoxal-phosphate-dependent aminotransferase family. Requires pyridoxal 5'-phosphate as cofactor.

The protein resides in the mitochondrion matrix. It catalyses the reaction N(2)-acetyl-L-ornithine + 2-oxoglutarate = N-acetyl-L-glutamate 5-semialdehyde + L-glutamate. It functions in the pathway amino-acid biosynthesis; L-arginine biosynthesis; N(2)-acetyl-L-ornithine from L-glutamate: step 4/4. The chain is Probable acetylornithine aminotransferase, mitochondrial (argD) from Dictyostelium discoideum (Social amoeba).